We begin with the raw amino-acid sequence, 587 residues long: D-lactate dehydrogenase [cytochrome] 1, mitochondrial (587 aa).

Positions S146–K327 constitute an FAD-binding PCMH-type domain.

This sequence belongs to the FAD-binding oxidoreductase/transferase type 4 family. It depends on FAD as a cofactor.

It is found in the mitochondrion inner membrane. The catalysed reaction is (R)-lactate + 2 Fe(III)-[cytochrome c] = 2 Fe(II)-[cytochrome c] + pyruvate + 2 H(+). Catalyzes the stereospecific oxidation of D-lactate to pyruvate. This chain is D-lactate dehydrogenase [cytochrome] 1, mitochondrial, found in Saccharomyces cerevisiae (strain ATCC 204508 / S288c) (Baker's yeast).